Here is a 315-residue protein sequence, read N- to C-terminus: Protein-export membrane protein SecF (315 aa).

Transmembrane regions (helical) follow at residues 35 to 55, 152 to 172, 181 to 201, 205 to 225, 242 to 264, and 282 to 302; these read MVLY…VHFP, QGIK…FLFF, IIFS…ILGI, TATI…NILL, LSAV…ILWL, and LLAD…WYIA.

This sequence belongs to the SecD/SecF family. SecF subfamily. Part of the protein translocation apparatus. Forms a complex with SecD.

The protein resides in the cell membrane. Its function is as follows. Involved in protein export. The chain is Protein-export membrane protein SecF from Thermococcus gammatolerans (strain DSM 15229 / JCM 11827 / EJ3).